Here is a 316-residue protein sequence, read N- to C-terminus: Small neutral protease regulatory protein (316 aa).

The region spanning 1–56 is the HTH lysR-type domain; it reads MRHLRALCAIADTGSVRRAARELGVSQPALTTQLRRIEQSLGAELFHRGRDGCRPT. The segment at residues 16 to 35 is a DNA-binding region (H-T-H motif); the sequence is VRRAARELGVSQPALTTQLR.

The protein belongs to the LysR transcriptional regulatory family.

In terms of biological role, transcriptional trans-activator of the gene (mprA) for the small neutral protease. The sequence is that of Small neutral protease regulatory protein (mprR) from Streptomyces coelicolor.